The sequence spans 868 residues: MQHMTTAQIRQQFLDFFASKQHQVVPSSSLIPGNDATLLFNNAGMVQFKDVFLGAESRPYTRATSSQRCVRAGGKHNDLENVGYTARHHTFFEMLGNFSFGDYFKQDAIKFAWQFLTEEVKLPKEKLLVTIYHDDEEAFNYWSNDIGLPADRIIRIATADNFWSMGDTGPCGPCSEIFYDHGEHIWGGPPGSPEEDGDRFIEIWNLVFMQYNRQNDGTMLPLPKQSVDTGMGLERIAAILQGVHSNYEIDLFKGLIAAAASVTNAQDMDDKSLRVVADHIRSCAFLISDGVMPSNEGRGYVLRRIIRRAVRHGNKLGAQGAFFYKLVAALIEQMGQAYPELAKQQEIIEKVLRIEEEQFGKTLERGLAILEESLSDLKGDVIPGDLVFKLYDTYGFPADLTADVARERQMTIDNKGFEECMAVQRKTAQQAGKFGADYNDQLKSDKQTTYKGYTTTSHSATVVEVFAGSESVSLLEDGQKGIVILDRTPFYAESGGQVGDTGVISVAGGEFTVTNTTKLGNAFAHHGIVQGRIGLNDKVEATIDDARRERIKKNHTATHILHETLRQLLGEHVGQKGSLVQAERLRFDFSHFEAVTKEELREIERVVNDEIRCNFALSTELMAIDDAKAKGAMALFGEKYDDEVRVVTIGDYSIELCGGTHVERAGDIGLFKIVSESGIAAGVRRIEAVTGADAIAYVSEQEQKLNDVAAVVKADSASVLEKVTALLDKSKQLEKQIAQLNDKLASAAGASLLDSVVEINGIKLLIANVKGTESKALRGMVDDLKNKIGSGVIALGVASDDKVSLIAGVTKDLTGRVKAGELVNHMASQVGGKGGGRPDMAQAGGSEPENLTAALDSVTAWFTEKTQA.

Residues histidine 555, histidine 559, cysteine 657, and histidine 661 each coordinate Zn(2+). The tract at residues 828–847 is disordered; the sequence is SQVGGKGGGRPDMAQAGGSE.

It belongs to the class-II aminoacyl-tRNA synthetase family. The cofactor is Zn(2+).

It is found in the cytoplasm. The enzyme catalyses tRNA(Ala) + L-alanine + ATP = L-alanyl-tRNA(Ala) + AMP + diphosphate. In terms of biological role, catalyzes the attachment of alanine to tRNA(Ala) in a two-step reaction: alanine is first activated by ATP to form Ala-AMP and then transferred to the acceptor end of tRNA(Ala). Also edits incorrectly charged Ser-tRNA(Ala) and Gly-tRNA(Ala) via its editing domain. The polypeptide is Alanine--tRNA ligase (Pseudoalteromonas translucida (strain TAC 125)).